The following is a 469-amino-acid chain: Actin-related protein 4 (469 aa).

The tract at residues 104–136 is disordered; it reads PERSTPPSKKGINISDDGDVPMEDDGNNNEDAT. Acidic residues predominate over residues 119-136; the sequence is DDGDVPMEDDGNNNEDAT.

This sequence belongs to the actin family. ARP4 subfamily. In terms of assembly, component of the NuA4 histone acetyltransferase complex, of the INO80 chromatin remodeling complex, and of the SWR1 chromatin remodeling complex.

Its subcellular location is the nucleus. In terms of biological role, chromatin interaction component of the NuA4 histone acetyltransferase complex which is involved in transcriptional activation of selected genes principally by acetylation of nucleosomal histone H4 and H2A. The NuA4 complex is also involved in DNA repair. Is required for NuA4 complex integrity. Component of the SWR1 complex which mediates the ATP-dependent exchange of histone H2A for the H2A variant H2A.Z leading to transcriptional regulation of selected genes by chromatin remodeling. Component of the INO80 complex which remodels chromatin by shifting nucleosomes and is involved in DNA repair. The chain is Actin-related protein 4 (arp-4) from Neurospora crassa (strain ATCC 24698 / 74-OR23-1A / CBS 708.71 / DSM 1257 / FGSC 987).